Consider the following 358-residue polypeptide: MIEKKIIADKFNSNFIWIFVDAADKYPKQMNIKANQEHIIYGEKCRLVGFLETESPSTGRFSTNHSTWTHSRPTVSGERFTHSFKTLASRMERLDQTISDRIRIVDGEISRHSDNEKICEQAACTLKTCDNVIVDVKKELEMLHSLRLEDQKKSLMNLIAKVQKSGMIQDLEKWRSLMESRYIFDNTFSSATPHGVLVEMCQCLELMSSMLRSVEQSIADRNHNGVTEKQLHEFKLAFDYFDQEKNGWLDYEHFELCLKSQGYNFSVESTLKETMSLLDPSTYEKHDYMRYMVKHETTNILDDHSAIEDALKNLDARKISDSMSRKEAEFFMSKIAKKAETSSDQVCLEYKDFVNSFY.

Residues 229-264 enclose the EF-hand domain; that stretch reads KQLHEFKLAFDYFDQEKNGWLDYEHFELCLKSQGYN. Positions 242, 246, 248, and 253 each coordinate Ca(2+).

This is an uncharacterized protein from Caenorhabditis elegans.